The chain runs to 425 residues: MASGQFVNKLQEEVICPICLDILQKPVTIDCGHNFCLKCITQIGETSCGFFKCPLCKTSVRKNAIRFNSLLRNLVEKIQALQASEVQSKRKEATCPRHQEMFHYFCEDDGKFLCFVCRESKDHKSHNVSLIEEAAQNYQGQIQEQIQVLQQKEKETVQVKAQGVHRVDVFTDQVEHEKQRILTEFELLHQVLEEEKNFLLSRIYWLGHEGTEAGKHYVASTEPQLNDLKKLVDSLKTKQNMPPRQLLEDIKVVLCRSEEFQFLNPTPVPLELEKKLSEAKSRHDSITGSLKKFKDQLQADRKKDENRFFKSMNKNDMKSWGLLQKNNHKMNKTSEPGSSSAGGRTTSGPPNHHSSAPSHSLFRASSAGKVTFPVCLLASYDEISGQGASSQDTKTFDVALSEELHAALSEWLTAIRAWFCEVPSS.

Residues 16–57 (CPICLDILQKPVTIDCGHNFCLKCITQIGETSCGFFKCPLCK) form an RING-type zinc finger. A B box-type zinc finger spans residues 90-131 (RKEATCPRHQEMFHYFCEDDGKFLCFVCRESKDHKSHNVSLI). C95, H98, C117, and H123 together coordinate Zn(2+). 2 coiled-coil regions span residues 126-162 (HNVSLIEEAAQNYQGQIQEQIQVLQQKEKETVQVKAQ) and 270-307 (LELEKKLSEAKSRHDSITGSLKKFKDQLQADRKKDENR). Residues 328-360 (HKMNKTSEPGSSSAGGRTTSGPPNHHSSAPSHS) are disordered. Residues 336 to 360 (PGSSSAGGRTTSGPPNHHSSAPSHS) are compositionally biased toward low complexity.

Belongs to the TRIM/RBCC family. May form oligomers. Interacts with isoform p52shc of SHC1. Post-translationally, auto-ubiquitinated (in vitro). Up-regulated in gastric adenocarcinomas.

The protein resides in the cytoplasm. The protein localises to the mitochondrion. It catalyses the reaction S-ubiquitinyl-[E2 ubiquitin-conjugating enzyme]-L-cysteine + [acceptor protein]-L-lysine = [E2 ubiquitin-conjugating enzyme]-L-cysteine + N(6)-ubiquitinyl-[acceptor protein]-L-lysine.. It functions in the pathway protein modification; protein ubiquitination. Its function is as follows. E3 ubiquitin-protein ligase that acts as a regulator of antiviral immune response and inflammation by mediating ubiquitination of substrates. Acts as a regulator of innate immune defense against viruses by mediating 'Lys-63'-linked ubiquitination of MAVS, promoting MAVS polymerization and formation of three-stranded helical filaments on mitochondria. Acts as a negative regulator of the NLRP3 inflammasome by catalyzing 'Lys-48'-linked ubiquitination of NLRP3, leading to its degradation. Regulator of Src-induced anchorage independent cell growth. This chain is E3 ubiquitin-protein ligase TRIM31, found in Homo sapiens (Human).